The primary structure comprises 867 residues: Rifampicin phosphotransferase (867 aa).

The segment at 1–314 is ATP-binding; that stretch reads MKPYVLKFQE…FYIVQSRPIT (314 aa). ATP-binding residues include Lys-22, Arg-117, Gly-132, Thr-136, Gln-183, Glu-297, Gln-309, and Arg-311. The segment at 327–754 is rifampicin-binding; that stretch reads NRVYISVAHQ…TSDGEMINGE (428 aa). Rifampicin is bound by residues Gln-336 and Tyr-351. Residues 767–865 form a swivel phosphohistidine region; sequence GLPVSSGTVE…INGTEGYIEI (99 aa). His-825 acts as the Tele-phosphohistidine intermediate in catalysis.

This sequence belongs to the rifampicin phosphotransferase family.

It catalyses the reaction rifampicin + ATP + H2O = 21-phosphorifampicin + AMP + phosphate + 2 H(+). Catalyzes the phosphorylation of rifampicin, also known as rifampin (RIF), leading to its inactivation. Confers high level resistance to a variety of clinically used rifamycin antibiotics. Does not show phosphoenolpyruvate (PEP) synthase activity. The sequence is that of Rifampicin phosphotransferase from Listeria monocytogenes serotype 4b (strain F2365).